The primary structure comprises 217 residues: RNA chaperone ProQ (217 aa).

A disordered region spans residues 105–166 (EAKARVQAQR…PREEQHTPVS (62 aa)). The span at 121–131 (KRERKPRPTTP) shows a compositional bias: basic residues. A compositionally biased stretch (basic and acidic residues) spans 132 to 162 (RRKEGAERKPRAQKPVEKAPKTVKAPREEQH).

Belongs to the ProQ family.

The protein localises to the cytoplasm. RNA chaperone with significant RNA binding, RNA strand exchange and RNA duplexing activities. May regulate ProP activity through an RNA-based, post-transcriptional mechanism. This chain is RNA chaperone ProQ, found in Escherichia coli O8 (strain IAI1).